The primary structure comprises 72 residues: Gas vesicle protein A (72 aa).

It belongs to the gas vesicle GvpA family. In terms of assembly, the gas vesicle shell is 2 nm thick and consists of a single layer of this protein. It forms helical ribs nearly perpendicular to the long axis of the vesicle.

The protein localises to the gas vesicle shell. Gas vesicles are hollow, gas filled proteinaceous nanostructures found in some microorganisms. During planktonic growth they allow positioning of the organism at a favorable depth for light or nutrient acquisition. GvpA forms the protein shell. The polypeptide is Gas vesicle protein A (Haloquadratum walsbyi (strain DSM 16790 / HBSQ001)).